The chain runs to 428 residues: Tyrosine--tRNA ligase (428 aa).

L-tyrosine is bound at residue Tyr-41. Residues 46–55 carry the 'HIGH' region motif; sequence PTADSLHLGH. The residue at position 148 (Lys-148) is an N6-acetyllysine. L-tyrosine-binding residues include Tyr-179 and Gln-183. The short motif at 239 to 243 is the 'KMSKS' region element; it reads KFGKT. Lys-242 serves as a coordination point for ATP. The 58-residue stretch at 361 to 418 folds into the S4 RNA-binding domain; it reads ADLMQALVDSELQPSRGQARKTIASNAITINGEKQSDPEYFFKEEDRLFGRFTLLRRG.

It belongs to the class-I aminoacyl-tRNA synthetase family. TyrS type 1 subfamily. As to quaternary structure, homodimer.

It localises to the cytoplasm. The enzyme catalyses tRNA(Tyr) + L-tyrosine + ATP = L-tyrosyl-tRNA(Tyr) + AMP + diphosphate + H(+). Its function is as follows. Catalyzes the attachment of tyrosine to tRNA(Tyr) in a two-step reaction: tyrosine is first activated by ATP to form Tyr-AMP and then transferred to the acceptor end of tRNA(Tyr). The chain is Tyrosine--tRNA ligase from Escherichia coli O1:K1 / APEC.